Reading from the N-terminus, the 194-residue chain is Adenylate kinase isoenzyme 1 (194 aa).

N-acetylmethionine is present on M1. 18–23 (GSGKGT) is a binding site for ATP. S38 is subject to Phosphoserine. An NMP region spans residues 38–67 (STGDLLRAEVSSGSSRGKMLSSIMEKGELV). AMP-binding positions include T39, R44, 65 to 67 (ELV), 94 to 97 (GYPR), and Q101. The interval 131-141 (KRGETSGRVDD) is LID. ATP is bound at residue R132. The AMP site is built by R138 and R149. G177 is a binding site for ATP.

The protein belongs to the adenylate kinase family. AK1 subfamily. Monomer. The cofactor is Mg(2+).

It localises to the cytoplasm. It catalyses the reaction a ribonucleoside 5'-phosphate + ATP = a ribonucleoside 5'-diphosphate + ADP. It carries out the reaction AMP + ATP = 2 ADP. The enzyme catalyses dAMP + ATP = dADP + ADP. The catalysed reaction is dATP + AMP = dADP + ADP. It catalyses the reaction dAMP + dATP = 2 dADP. It carries out the reaction a 2'-deoxyribonucleoside 5'-diphosphate + ATP = a 2'-deoxyribonucleoside 5'-triphosphate + ADP. The enzyme catalyses a ribonucleoside 5'-diphosphate + ATP = a ribonucleoside 5'-triphosphate + ADP. The catalysed reaction is CDP + GTP = CTP + GDP. It catalyses the reaction GDP + ATP = GTP + ADP. It carries out the reaction UDP + ATP = UTP + ADP. The enzyme catalyses GTP + UDP = UTP + GDP. The catalysed reaction is dTDP + GTP = dTTP + GDP. It catalyses the reaction dCDP + GTP = dCTP + GDP. It carries out the reaction dGDP + ATP = dGTP + ADP. The enzyme catalyses dADP + GTP = dATP + GDP. The catalysed reaction is thiamine diphosphate + ADP = thiamine triphosphate + AMP. In terms of biological role, catalyzes the reversible transfer of the terminal phosphate group between ATP and AMP. Also displays broad nucleoside diphosphate kinase activity. Plays an important role in cellular energy homeostasis and in adenine nucleotide metabolism. Also catalyzes at a very low rate the synthesis of thiamine triphosphate (ThTP) from thiamine diphosphate (ThDP) and ADP. This Rattus norvegicus (Rat) protein is Adenylate kinase isoenzyme 1 (Ak1).